We begin with the raw amino-acid sequence, 283 residues long: 4-diphosphocytidyl-2-C-methyl-D-erythritol kinase (283 aa).

Lysine 10 is an active-site residue. 99 to 109 (PMGGGLGGGSS) lines the ATP pocket. The active site involves aspartate 141.

It belongs to the GHMP kinase family. IspE subfamily. In terms of assembly, homodimer.

The catalysed reaction is 4-CDP-2-C-methyl-D-erythritol + ATP = 4-CDP-2-C-methyl-D-erythritol 2-phosphate + ADP + H(+). It functions in the pathway isoprenoid biosynthesis; isopentenyl diphosphate biosynthesis via DXP pathway; isopentenyl diphosphate from 1-deoxy-D-xylulose 5-phosphate: step 3/6. Catalyzes the phosphorylation of the position 2 hydroxy group of 4-diphosphocytidyl-2C-methyl-D-erythritol. The polypeptide is 4-diphosphocytidyl-2-C-methyl-D-erythritol kinase (Escherichia coli (strain 55989 / EAEC)).